The sequence spans 308 residues: Homoserine kinase (308 aa).

ATP is bound at residue 94–104 (PLARGLGSSAT).

It belongs to the GHMP kinase family. Homoserine kinase subfamily.

The protein resides in the cytoplasm. The catalysed reaction is L-homoserine + ATP = O-phospho-L-homoserine + ADP + H(+). Its pathway is amino-acid biosynthesis; L-threonine biosynthesis; L-threonine from L-aspartate: step 4/5. In terms of biological role, catalyzes the ATP-dependent phosphorylation of L-homoserine to L-homoserine phosphate. This chain is Homoserine kinase, found in Crocosphaera subtropica (strain ATCC 51142 / BH68) (Cyanothece sp. (strain ATCC 51142)).